A 487-amino-acid polypeptide reads, in one-letter code: MVETSIDMEEGTLEIGMEYRTVSGVAGPLVILDKVKGPKYQEIVNIRLGDGSTRRGQVLEVDGEKAVVQVFEGTSGIDNKFTTVQFTGEVLKTPVSLDMLGRIFNGSGKPIDNGPPILPEAYLDISGSSINPSERTYPEEMIQTGISTIDVMNSIARGQKIPLFSAAGLPHNEIAAQICRQAGLVKRLEKTENLIQEDHGEDNFAIVFAAMGVNMETAQFFKRDFEENGSMERVTLFLNLANDPTIERIITPRIALTTAEYLAYECGKHVLVILTDMSSYADALREVSAAREEVPGRRGYPGYMYTDLATIYERAGRIEGRKGSITQIPILTMPNDDITHPTPDLTGYITEGQIYIDRQLHNRQIYPPINVLPSLSRLMKSAIGEGMTRKDHSDVSNQLYANYAIGKDVQAMKAVVGEEALSSEDLLYLEFLDKFERKFVMQGAYDTRNIFQSLDLAWTLLRIFPRELLHRIPAKTLDQFYSRDSTS.

This sequence belongs to the ATPase alpha/beta chains family. In terms of assembly, V-ATPase is a heteromultimeric enzyme composed of a peripheral catalytic V1 complex (components A to H) attached to an integral membrane V0 proton pore complex (components: a, c, c'', d and e).

The protein resides in the vacuole membrane. Non-catalytic subunit of the peripheral V1 complex of vacuolar ATPase. V-ATPase is responsible for acidifying a variety of intracellular compartments in eukaryotic cells. This chain is V-type proton ATPase subunit B3 (VHA-B3), found in Arabidopsis thaliana (Mouse-ear cress).